The chain runs to 395 residues: Phosphoglycerate kinase (395 aa).

Substrate-binding positions include 20-22 (DLN), R35, 58-61 (HFGR), R117, and R150. ATP contacts are provided by residues K200, E322, and 352–355 (GGDT).

The protein belongs to the phosphoglycerate kinase family. In terms of assembly, monomer.

It is found in the cytoplasm. The enzyme catalyses (2R)-3-phosphoglycerate + ATP = (2R)-3-phospho-glyceroyl phosphate + ADP. It participates in carbohydrate degradation; glycolysis; pyruvate from D-glyceraldehyde 3-phosphate: step 2/5. In Brucella suis biovar 1 (strain 1330), this protein is Phosphoglycerate kinase.